A 216-amino-acid polypeptide reads, in one-letter code: GTP cyclohydrolase 1 (216 aa).

Cysteine 109, histidine 112, and cysteine 180 together coordinate Zn(2+).

It belongs to the GTP cyclohydrolase I family. Homomer.

It carries out the reaction GTP + H2O = 7,8-dihydroneopterin 3'-triphosphate + formate + H(+). It functions in the pathway cofactor biosynthesis; 7,8-dihydroneopterin triphosphate biosynthesis; 7,8-dihydroneopterin triphosphate from GTP: step 1/1. The polypeptide is GTP cyclohydrolase 1 (Tolumonas auensis (strain DSM 9187 / NBRC 110442 / TA 4)).